Consider the following 233-residue polypeptide: Achaete-scute homolog 1 (233 aa).

Disordered regions lie at residues 1–24 (MESSGKMESGAGQQPQPPQPFLPP) and 39–95 (AAAA…ELMR). Residues 39–62 (AAAAAAQSAQQQQQQQAPQQQAPQ) are compositionally biased toward low complexity. A compositionally biased stretch (basic residues) spans 78–87 (SAAKQVKRQR). The 53-residue stretch at 115–167 (AAVARRNERERNRVKLVNLGFATLREHVPNGAANKKMSKVETLRSAVEYIRAL) folds into the bHLH domain. At Lys153 the chain carries N6-acetyllysine.

As to quaternary structure, efficient DNA binding requires dimerization with another bHLH protein. Forms a heterodimer with TCF3. In terms of tissue distribution, developing CNS and PNS at embryonic and postnatal stages.

It localises to the nucleus. In terms of biological role, transcription factor that plays a key role in neuronal differentiation: acts as a pioneer transcription factor, accessing closed chromatin to allow other factors to bind and activate neural pathways. Directly binds the E box motif (5'-CANNTG-3') on promoters and promotes transcription of neuronal genes. The combination of three transcription factors, ASCL1, POU3F2/BRN2 and MYT1L, is sufficient to reprogram fibroblasts and other somatic cells into induced neuronal (iN) cells in vitro. Plays a role at early stages of development of specific neural lineages in most regions of the CNS, and of several lineages in the PNS. Essential for the generation of olfactory and autonomic neurons. Acts synergistically with FOXN4 to specify the identity of V2b neurons rather than V2a from bipotential p2 progenitors during spinal cord neurogenesis, probably through DLL4-NOTCH signaling activation. Involved in the regulation of neuroendocrine cell development in the glandular stomach. In Rattus norvegicus (Rat), this protein is Achaete-scute homolog 1 (Ascl1).